Consider the following 356-residue polypeptide: Replication factor C subunit 3 (356 aa).

Lysine 20 bears the N6-acetyllysine mark. Serine 125 is modified (phosphoserine).

Belongs to the activator 1 small subunits family. In terms of assembly, subunit of the RFC complex, an heteropentameric complex consisting of a large subunit RFC1 and four small subunits RFC2, RFC3, RFC4 and RFC5; the RFC complex interacts with PCNA. Forms an heterotetrameric complex with RFC2, RFC4 and RFC5; this complex has ATPase activity but is not stimulated by PCNA. The heterotetramer of subunits RFC2, RFC3, RFC4 and RFC5 interacts with RAD17. Interacts with CNTD1; this interaction facilitates crossover formation.

It localises to the nucleus. Functionally, subunit of the replication factor C (RFC) complex which acts during elongation of primed DNA templates by DNA polymerases delta and epsilon, and is necessary for ATP-dependent loading of proliferating cell nuclear antigen (PCNA) onto primed DNA. This Mus musculus (Mouse) protein is Replication factor C subunit 3 (Rfc3).